The following is a 462-amino-acid chain: Trigger factor (462 aa).

Positions 163–248 (GDEVLFDFKG…LKEVRRVNSL (86 aa)) constitute a PPIase FKBP-type domain. A disordered region spans residues 442-462 (SMQEKQTQEPAEEKVETKEEK). The segment covering 452-462 (AEEKVETKEEK) has biased composition (basic and acidic residues).

It belongs to the FKBP-type PPIase family. Tig subfamily.

Its subcellular location is the cytoplasm. It carries out the reaction [protein]-peptidylproline (omega=180) = [protein]-peptidylproline (omega=0). Its function is as follows. Involved in protein export. Acts as a chaperone by maintaining the newly synthesized protein in an open conformation. Functions as a peptidyl-prolyl cis-trans isomerase. This Mycoplasmopsis synoviae (strain 53) (Mycoplasma synoviae) protein is Trigger factor.